The sequence spans 156 residues: Small ribosomal subunit protein uS7 (156 aa).

It belongs to the universal ribosomal protein uS7 family. In terms of assembly, part of the 30S ribosomal subunit. Contacts proteins S9 and S11.

In terms of biological role, one of the primary rRNA binding proteins, it binds directly to 16S rRNA where it nucleates assembly of the head domain of the 30S subunit. Is located at the subunit interface close to the decoding center, probably blocks exit of the E-site tRNA. The polypeptide is Small ribosomal subunit protein uS7 (Bartonella quintana (strain Toulouse) (Rochalimaea quintana)).